The following is a 254-amino-acid chain: MKKKIIAANWKLNGSIKTISYFLTFLKSQISSFLKNNIIIIAPPTVFLERVYKDINSINIHLAAQNIDVNLTGAFTGENSALMMKDIGVKYIIIGHSERRLLHNENNEIIAKKFCLVKNLNLVPILCIGETEAEKKSNKTEKILKEQLNSIFNSFGEKAFRNAVIAYEPIWSIGTGVSADPKNVQLIHKFIKNYIKKYDIVSAENLIVQYGGSVTSLNAGNFLKQPDIDGLLIGSASLKHEEFLKIIKISDSFL.

9 to 11 is a binding site for substrate; it reads NWK. H96 (electrophile) is an active-site residue. E168 serves as the catalytic Proton acceptor. Residues G174 and S213 each contribute to the substrate site.

Belongs to the triosephosphate isomerase family. As to quaternary structure, homodimer.

It is found in the cytoplasm. The enzyme catalyses D-glyceraldehyde 3-phosphate = dihydroxyacetone phosphate. Its pathway is carbohydrate biosynthesis; gluconeogenesis. It functions in the pathway carbohydrate degradation; glycolysis; D-glyceraldehyde 3-phosphate from glycerone phosphate: step 1/1. Its function is as follows. Involved in the gluconeogenesis. Catalyzes stereospecifically the conversion of dihydroxyacetone phosphate (DHAP) to D-glyceraldehyde-3-phosphate (G3P). The protein is Triosephosphate isomerase of Buchnera aphidicola subsp. Schizaphis graminum (strain Sg).